The primary structure comprises 251 residues: Phosphate import ATP-binding protein PstB (251 aa).

In terms of domain architecture, ABC transporter spans I5–I246. Residue G37–S44 coordinates ATP.

This sequence belongs to the ABC transporter superfamily. Phosphate importer (TC 3.A.1.7) family. As to quaternary structure, the complex is composed of two ATP-binding proteins (PstB), two transmembrane proteins (PstC and PstA) and a solute-binding protein (PstS).

It is found in the cell membrane. It catalyses the reaction phosphate(out) + ATP + H2O = ADP + 2 phosphate(in) + H(+). In terms of biological role, part of the ABC transporter complex PstSACB involved in phosphate import. Responsible for energy coupling to the transport system. This Dehalococcoides mccartyi (strain CBDB1) protein is Phosphate import ATP-binding protein PstB.